The following is a 207-amino-acid chain: Small ribosomal subunit protein uS4 (207 aa).

Positions 31–54 are disordered; the sequence is KCKLDSKPGQHGRTSGARTSDYGN. Polar residues predominate over residues 42–53; sequence GRTSGARTSDYG. Residues 97–160 form the S4 RNA-binding domain; the sequence is SRLDNVVYRM…KKQVRIAEAL (64 aa).

The protein belongs to the universal ribosomal protein uS4 family. In terms of assembly, part of the 30S ribosomal subunit. Contacts protein S5. The interaction surface between S4 and S5 is involved in control of translational fidelity.

In terms of biological role, one of the primary rRNA binding proteins, it binds directly to 16S rRNA where it nucleates assembly of the body of the 30S subunit. Functionally, with S5 and S12 plays an important role in translational accuracy. In Cupriavidus metallidurans (strain ATCC 43123 / DSM 2839 / NBRC 102507 / CH34) (Ralstonia metallidurans), this protein is Small ribosomal subunit protein uS4.